The following is a 201-amino-acid chain: Holliday junction branch migration complex subunit RuvA (201 aa).

A domain I region spans residues 1–65 (MIAYIEGRVA…EDALELYGFS (65 aa)). Residues 66–143 (GWDERQTFLV…KVESLPASAG (78 aa)) are domain II. A flexible linker region spans residues 143–147 (GLAAG). The segment at 148 to 201 (VPGSVLRDAVQALGNLGYAEEEAAPVLKNILKQDPDLDVSEALRAALKALAKAR) is domain III.

Belongs to the RuvA family. In terms of assembly, homotetramer. Forms an RuvA(8)-RuvB(12)-Holliday junction (HJ) complex. HJ DNA is sandwiched between 2 RuvA tetramers; dsDNA enters through RuvA and exits via RuvB. An RuvB hexamer assembles on each DNA strand where it exits the tetramer. Each RuvB hexamer is contacted by two RuvA subunits (via domain III) on 2 adjacent RuvB subunits; this complex drives branch migration. In the full resolvosome a probable DNA-RuvA(4)-RuvB(12)-RuvC(2) complex forms which resolves the HJ.

The protein resides in the cytoplasm. In terms of biological role, the RuvA-RuvB-RuvC complex processes Holliday junction (HJ) DNA during genetic recombination and DNA repair, while the RuvA-RuvB complex plays an important role in the rescue of blocked DNA replication forks via replication fork reversal (RFR). RuvA specifically binds to HJ cruciform DNA, conferring on it an open structure. The RuvB hexamer acts as an ATP-dependent pump, pulling dsDNA into and through the RuvAB complex. HJ branch migration allows RuvC to scan DNA until it finds its consensus sequence, where it cleaves and resolves the cruciform DNA. The chain is Holliday junction branch migration complex subunit RuvA from Oleidesulfovibrio alaskensis (strain ATCC BAA-1058 / DSM 17464 / G20) (Desulfovibrio alaskensis).